The chain runs to 423 residues: Pentamidine resistance factor, mitochondrial (423 aa).

A helical membrane pass occupies residues 199 to 219 (PVFFTLVFIFEEVSVLIFTFF).

Interacts with COX18. This interaction may be essential for its insertion into mitochondrial inner membrane.

The protein resides in the mitochondrion inner membrane. Its function is as follows. Probably involved in mitochondrial export. Confers resistance to the anti-pneumocystis carinii drug pentamidine. May act by the removal of pentamidine, or its damage targets, from the matrix by an active-transport mechanism. The protein is Pentamidine resistance factor, mitochondrial (PNT1) of Saccharomyces cerevisiae (strain ATCC 204508 / S288c) (Baker's yeast).